The following is a 208-amino-acid chain: Uridine kinase (208 aa).

11 to 18 (GGSGSGKT) serves as a coordination point for ATP.

It belongs to the uridine kinase family.

The protein resides in the cytoplasm. It carries out the reaction uridine + ATP = UMP + ADP + H(+). The catalysed reaction is cytidine + ATP = CMP + ADP + H(+). The protein operates within pyrimidine metabolism; CTP biosynthesis via salvage pathway; CTP from cytidine: step 1/3. Its pathway is pyrimidine metabolism; UMP biosynthesis via salvage pathway; UMP from uridine: step 1/1. The polypeptide is Uridine kinase (Staphylococcus carnosus (strain TM300)).